Here is a 453-residue protein sequence, read N- to C-terminus: mRNA cleavage and polyadenylation factor CLP1 (453 aa).

ATP contacts are provided by residues Glu-31, Lys-70, and 146–151; that span reads NSGKTS.

This sequence belongs to the Clp1 family. Clp1 subfamily. As to quaternary structure, component of a pre-mRNA cleavage factor complex. Interacts directly with PCF11.

The protein localises to the nucleus. Functionally, required for endonucleolytic cleavage during polyadenylation-dependent pre-mRNA 3'-end formation. This chain is mRNA cleavage and polyadenylation factor CLP1, found in Scheffersomyces stipitis (strain ATCC 58785 / CBS 6054 / NBRC 10063 / NRRL Y-11545) (Yeast).